We begin with the raw amino-acid sequence, 122 residues long: UPF0145 protein TV0671 (122 aa).

The protein belongs to the UPF0145 family.

This is UPF0145 protein TV0671 from Thermoplasma volcanium (strain ATCC 51530 / DSM 4299 / JCM 9571 / NBRC 15438 / GSS1).